A 4763-amino-acid polypeptide reads, in one-letter code: Nonribosomal peptide synthetase sidC (4763 aa).

The interval 1–24 is disordered; the sequence is MAGTANPADEGLTGPTETTNHINS. The span at 15-24 shows a compositional bias: polar residues; that stretch reads PTETTNHINS. The adenylation 1 stretch occupies residues 296-815; it reads STVAEHSTLT…SSGKVDRNSI (520 aa). The region spanning 853–930 is the Carrier 1 domain; it reads EKALELRTLV…GLLTLILNGK (78 aa). Ser-890 is subject to O-(pantetheine 4'-phosphoryl)serine. Residues 1003–1396 form a condensation 1 region; the sequence is TRSYIYHSVI…DIIAFILQNP (394 aa). Residues 1398 to 1951 are adenylation 2; that stretch reads GDFENALLYT…AKTDRRALQA (554 aa). One can recognise a Carrier 2 domain in the interval 1979–2055; the sequence is LVASDAMEKI…DLARLCTSSS (77 aa). Ser-2016 is modified (O-(pantetheine 4'-phosphoryl)serine). Residues 2092 to 2423 form a condensation 2 region; the sequence is TPIQESLLSE…HIHAREVRRM (332 aa). Residues 2556 to 3070 form an adenylation 3 region; the sequence is ELNAREHPEW…MSGKANIKEL (515 aa). The 77-residue stretch at 3099–3175 folds into the Carrier 3 domain; the sequence is RPLSSDEEAV…QLAQLPRKST (77 aa). At Ser-3136 the chain carries O-(pantetheine 4'-phosphoryl)serine. The tract at residues 3217–3626 is condensation 3; sequence PLQEGLVARS…DDIALDSFSL (410 aa). The Carrier 4 domain occupies 3647-3720; sequence SATETKIRDL…ALAEHVDERS (74 aa). At Ser-3681 the chain carries O-(pantetheine 4'-phosphoryl)serine. A condensation 4 region spans residues 3761 to 4093; sequence TPLQAGMITR…SLFDTLFVFQ (333 aa). The 74-residue stretch at 4204 to 4277 folds into the Carrier 5 domain; the sequence is PAHESIIRDV…GISARIISPV (74 aa). Ser-4238 is modified (O-(pantetheine 4'-phosphoryl)serine). Residues 4344–4593 form a condensation 5 region; sequence ERIDSGKLEE…PCLNVTPFTF (250 aa).

It belongs to the NRP synthetase family.

It functions in the pathway siderophore biosynthesis. Nonribosomal peptide synthase; part of the siderophore biosynthetic pathway. Aspergillus fumigatus produces four types of siderophores, low-molecular-mass iron chelators, including excreted fusarinine C (FsC) and triacetylfusarinine C (TAFC) for iron uptake; and intacellular ferricrocin (FC) for hyphal and hydroxyferricrocin (HFC) for conidial iron distribution and storage. TAFC consists of three N(2)-acetyl-N(5)-anhydromevalonyl-N(5)-hydroxyornithine residues cyclically linked by ester bonds; FC is a cyclic hexapeptide with the structure Gly-Ser-Gly-(N(5)-acetyl-N(5)-hydroxyornithine)x3. The biosynthesis of all four siderophores depends on the hydroxylation of ornithine, catalyzed by the monooxygenase sidA. Subsequently, the pathways for biosynthesis of extra- and intracellular siderophores split. For biosynthesis of extracellular siderophores, the transacylase sidF transfers anhydromevalonyl to N(5)-hydroxyornithine. The required anhydromevalonyl-CoA moiety is derived from mevalonate by CoA ligation and dehydration catalyzed by sidI and sidH respectively. The acetylation of N(5)-hydroxyornithine for FC biosynthesis involves the constitutively expressed sidL. FC is hydroxylated to HFC by an as yet uncharacterized enzyme during conidiation. Assembly of fusarinine C (FsC) and FC is catalyzed by two different nonribosomal peptide synthetases (NRPS), sidD and sidC respectively. Subsequently, sidG catalyzes N2-acetylation of FsC for forming TAFC. Both extra- and intracellular siderophores are crucial for growth during iron limitation and virulence. The polypeptide is Nonribosomal peptide synthetase sidC (Aspergillus fumigatus (strain ATCC MYA-4609 / CBS 101355 / FGSC A1100 / Af293) (Neosartorya fumigata)).